Here is a 174-residue protein sequence, read N- to C-terminus: Small ribosomal subunit protein uS5 (174 aa).

In terms of domain architecture, S5 DRBM spans 19–82; that stretch reads LREKMVAINR…DEARRKMVKV (64 aa).

This sequence belongs to the universal ribosomal protein uS5 family. In terms of assembly, part of the 30S ribosomal subunit. Contacts proteins S4 and S8.

In terms of biological role, with S4 and S12 plays an important role in translational accuracy. Located at the back of the 30S subunit body where it stabilizes the conformation of the head with respect to the body. The polypeptide is Small ribosomal subunit protein uS5 (Azoarcus sp. (strain BH72)).